A 453-amino-acid chain; its full sequence is Secreted triacylglycerol lipase LIP3 (453 aa).

Positions Met1–Ala19 are cleaved as a signal peptide. An N-linked (GlcNAc...) asparagine glycan is attached at Asn98. Cys115 and Cys284 are disulfide-bonded. The Nucleophile role is filled by Ser197. Residue Asn230 is glycosylated (N-linked (GlcNAc...) asparagine). Residues Asp344 and His378 contribute to the active site. Cys360 and Cys406 are joined by a disulfide.

It belongs to the AB hydrolase superfamily. Lipase family. Class Lip subfamily.

The protein resides in the secreted. It localises to the cell wall. It catalyses the reaction a triacylglycerol + H2O = a diacylglycerol + a fatty acid + H(+). The catalysed reaction is a monoacylglycerol + H2O = glycerol + a fatty acid + H(+). The enzyme catalyses a diacylglycerol + H2O = a monoacylglycerol + a fatty acid + H(+). Secreted lipase involved in Dandruff and seborrheic dermatitis (D/SD) probably via lipase-mediated breakdown of sebaceous lipids and release of irritating free fatty acids. Has triacylglycerol lipase activity and is able to hydrolyze triolein, tristearin, trilinolein, tripalmitoylglycerol and trihexadecenoin. Hydrolyzes diacylglycerols such as distearin, dilinolein, dipalmitoylglycerol and dipalmitolein. Mostly converts monoolein to di- and triolein, while free fatty acids are only produced in low amounts. This Malassezia globosa (strain ATCC MYA-4612 / CBS 7966) (Dandruff-associated fungus) protein is Secreted triacylglycerol lipase LIP3.